The chain runs to 257 residues: 7-carboxy-7-deazaguanine synthase (257 aa).

Positions 1 to 25 (MKSVDHPVDVLPAEHSAETPGDARA) are disordered. Residues 39–41 (RQG) and arginine 54 each bind substrate. One can recognise a Radical SAM core domain in the interval 45-244 (LTGTESVFIR…AISRGYQYCD (200 aa)). The [4Fe-4S] cluster site is built by cysteine 58, cysteine 62, and cysteine 65. Threonine 67 is a Mg(2+) binding site. Threonine 99 contacts substrate. S-adenosyl-L-methionine-binding positions include glycine 101 and 143-145 (SPK).

The protein belongs to the radical SAM superfamily. 7-carboxy-7-deazaguanine synthase family. In terms of assembly, homodimer. It depends on [4Fe-4S] cluster as a cofactor. The cofactor is S-adenosyl-L-methionine. Mg(2+) serves as cofactor.

It catalyses the reaction 6-carboxy-5,6,7,8-tetrahydropterin + H(+) = 7-carboxy-7-deazaguanine + NH4(+). It participates in purine metabolism; 7-cyano-7-deazaguanine biosynthesis. Its function is as follows. Catalyzes the complex heterocyclic radical-mediated conversion of 6-carboxy-5,6,7,8-tetrahydropterin (CPH4) to 7-carboxy-7-deazaguanine (CDG), a step common to the biosynthetic pathways of all 7-deazapurine-containing compounds. This Rhodopirellula baltica (strain DSM 10527 / NCIMB 13988 / SH1) protein is 7-carboxy-7-deazaguanine synthase.